We begin with the raw amino-acid sequence, 515 residues long: RNA exonuclease NGL2 (515 aa).

Disordered stretches follow at residues 1-54 (MTQD…SKPI) and 353-381 (RDGEEGADDEEGGNIEKYGKDQPESPVPE). The segment covering 21-34 (EINKSVKDAKHQTN) has biased composition (basic and acidic residues). Residues 40 to 52 (QHKKKGKKGKKSK) are compositionally biased toward basic residues. A compositionally biased stretch (basic and acidic residues) spans 369 to 381 (KYGKDQPESPVPE).

The protein belongs to the CCR4/nocturin family.

Its subcellular location is the cytoplasm. The protein localises to the nucleus. Functionally, involved in pre-rRNA processing. Required for the final stage of 3'-end maturation of 5.8S rRNA at site E. This is RNA exonuclease NGL2 (NGL2) from Saccharomyces cerevisiae (strain ATCC 204508 / S288c) (Baker's yeast).